The chain runs to 38 residues: Conotoxin FVIA (38 aa).

The propeptide occupies 1–12; the sequence is ILSLSLLDRSTR. 3 disulfide bridges follow: cysteine 13–cysteine 28, cysteine 20–cysteine 32, and cysteine 27–cysteine 37. Cysteine 37 carries the cysteine amide modification.

It belongs to the conotoxin O1 superfamily. As to expression, expressed by the venom duct.

Its subcellular location is the secreted. Omega-conotoxins act at presynaptic membranes, they bind and block voltage-gated calcium channels (Cav). This peptide reversibly and selectively inhibits Cav2.2/CACNA1B (IC(50)=11.5 nM) voltage-gated calcium channels. Channel time recovery after toxin exposure is short (about 50 seconds). In vivo, it effectively and dose-dependently reduces nociceptive behavior in the formalin test and in neuropathic pain models, and reduces mechanical and thermal allodynia in the tail nerve injury rat model. It also shows significant analgesic effects on writhing in mouse neurotransmitter- and cytokine-induced pain models, though it has no effect on acute thermal pain and interferon-gamma-induced pain. It also depresses blood pressure immediately after administration, but pressure recovers relatively quickly and completely. This Conus fulmen (Thunderbolt cone) protein is Conotoxin FVIA.